The sequence spans 166 residues: Thiol peroxidase (166 aa).

The Thioredoxin domain occupies 18–164 (VKVGDKAPNF…YEKAIEAAKA (147 aa)). C60 functions as the Cysteine sulfenic acid (-SOH) intermediate in the catalytic mechanism. C60 and C94 are oxidised to a cystine.

The protein belongs to the peroxiredoxin family. Tpx subfamily. As to quaternary structure, homodimer.

The catalysed reaction is a hydroperoxide + [thioredoxin]-dithiol = an alcohol + [thioredoxin]-disulfide + H2O. Thiol-specific peroxidase that catalyzes the reduction of hydrogen peroxide and organic hydroperoxides to water and alcohols, respectively. Plays a role in cell protection against oxidative stress by detoxifying peroxides. In Halalkalibacterium halodurans (strain ATCC BAA-125 / DSM 18197 / FERM 7344 / JCM 9153 / C-125) (Bacillus halodurans), this protein is Thiol peroxidase.